The chain runs to 494 residues: UPF0371 protein SPJ_0333 (494 aa).

This sequence belongs to the UPF0371 family.

This is UPF0371 protein SPJ_0333 from Streptococcus pneumoniae (strain JJA).